We begin with the raw amino-acid sequence, 127 residues long: Venom protein family 16 protein 1 (127 aa).

An N-terminal signal peptide occupies residues 1 to 18; it reads MWIWYSLLFFGVCHLAHS.

As to expression, expressed by the venom gland (anterior main gland) (at protein level).

The protein localises to the secreted. In Platymeris rhadamanthus (Red spot assassin bug), this protein is Venom protein family 16 protein 1.